Here is a 98-residue protein sequence, read N- to C-terminus: Hainantoxin-XVII-2 (98 aa).

An N-terminal signal peptide occupies residues 1–40; the sequence is MTTVGVSLFRRSPEKITMKIATFLGLSFLLIASYVLICEA. A propeptide spanning residues 41-64 is cleaved from the precursor; sequence QHPGFQELLILEENMRDPENSKER. 2 disulfides stabilise this stretch: Cys-66–Cys-81 and Cys-73–Cys-85.

It belongs to the hainantoxin family. 17 subfamily. Expressed by the venom gland.

The protein resides in the secreted. Its function is as follows. Putative ion channel inhibitor. This chain is Hainantoxin-XVII-2, found in Cyriopagopus hainanus (Chinese bird spider).